Here is a 551-residue protein sequence, read N- to C-terminus: Cleavage and polyadenylation specificity factor subunit 6 (551 aa).

Residues 81–161 (IALYIGNLTW…QNPVVTPCNK (81 aa)) enclose the RRM domain. Phosphothreonine is present on threonine 157. Residues 169–180 (MQSRKTTQSGQM) show a composition bias toward polar residues. 2 disordered regions span residues 169–410 (MQSR…TPLS) and 477–551 (LHGI…YRHR). 3 stretches are compositionally biased toward pro residues: residues 237–265 (TRPP…PLAG), 285–366 (GQPP…PPPA), and 377–388 (GPPPTDPYGRPP). Basic and acidic residues-rich tracts occupy residues 389–404 (PYDR…EMDA) and 489–503 (SRRE…SRSR). Phosphoserine is present on residues serine 494, serine 500, serine 511, serine 513, and serine 525. Residues 504–514 (EKSRRHKSRSR) are compositionally biased toward basic residues. Residues 515-551 (DRHDDYYRERSRERERHRDRDRDRDRERDREREYRHR) are compositionally biased toward basic and acidic residues.

It belongs to the RRM CPSF6/7 family. Component of the cleavage factor Im (CFIm) complex.

Its subcellular location is the nucleus. It localises to the nucleoplasm. The protein resides in the nucleus speckle. It is found in the cytoplasm. Functionally, component of the cleavage factor Im (CFIm) complex that functions as an activator of the pre-mRNA 3'-end cleavage and polyadenylation processing required for the maturation of pre-mRNA into functional mRNAs. CFIm contributes to the recruitment of multiprotein complexes on specific sequences on the pre-mRNA 3'-end, so called cleavage and polyadenylation signals (pA signals). Most pre-mRNAs contain multiple pA signals, resulting in alternative cleavage and polyadenylation (APA) producing mRNAs with variable 3'-end formation. The CFIm complex acts as a key regulator of cleavage and polyadenylation site choice during APA through its binding to 5'-UGUA-3' elements localized in the 3'-untranslated region (UTR) for a huge number of pre-mRNAs. Plays a role in mRNA export. The sequence is that of Cleavage and polyadenylation specificity factor subunit 6 from Gallus gallus (Chicken).